A 526-amino-acid polypeptide reads, in one-letter code: Reticulocyte-binding protein homolog 5 (526 aa).

An N-terminal signal peptide occupies residues 1 to 24 (MIRIKKKLILTIIYIHLFILNRLS). The segment at 33–51 (KNQENNLTLLPIKSTEEEK) is mediates interaction with human BSG. 2 N-linked (GlcNAc...) asparagine glycosylation sites follow: Asn38 and Asn214. 2 cysteine pairs are disulfide-bonded: Cys224–Cys317 and Cys345–Cys351. Residues 259-279 (EIDDKSEETDDETEEVEDSIQ) show a composition bias toward acidic residues. The disordered stretch occupies residues 259–294 (EIDDKSEETDDETEEVEDSIQDTDSNHTPSNKKKND). Asn297 carries an N-linked (GlcNAc...) asparagine glycan.

Forms a complex composed of RH5, P113 and human BSG/basigin; the complex bridges the merozoite and host erythrocyte membranes. Within the complex, interacts (via C-terminus) with human BSG/basigin isoform 2 (via the extracellular domain); the interaction is independent of BSG glycosylation status. Weakly interacts with P.troglodytes BSG but not with G.gorilla BSG. Also, interacts (via N-terminus) with P113; the interaction tethers RH5 to the merozoite membrane. Component of the PfRH5 adhesion complex composed of 1 copy of CyRPA, RH5 and RIPR; the complex is formed during merozoite invasion of host erythrocytes specifically at the interface between the parasite and host membranes. Within the complex, interacts with CyRPA. CyRPA recruits RIPR to the RH5-P113-BSG complex; the formation of the PfRH5 adhesion complex increases the affinity of RH5 for BSG and probably leads to the release of RH5 from P113 while maintaining the interaction of the PfRH5 adhesion complex with BSG. In terms of processing, cleaved into a 45kDa form during merozoite invasion of host erythrocyte.

The protein resides in the secreted. It is found in the cytoplasmic vesicle. It localises to the secretory vesicle. Its subcellular location is the rhoptry lumen. The protein localises to the host cell membrane. In terms of biological role, essential for the invasion of host erythrocytes by blood stage merozoites. By binding P113 at the surface of the merozoite and human BSG/basigin on the erythrocyte membrane, leads to the establishment of a tight junction between the merozoite and host erythrocyte membranes. In addition, the interaction with BSG results in BSG dimerization which triggers an increase in intracellular Ca(2+) in the erythrocyte. This essential step leads to a rearrangement of the erythrocyte cytoskeleton required for the merozoite invasion. The sequence is that of Reticulocyte-binding protein homolog 5 from Plasmodium falciparum (isolate 3D7).